Reading from the N-terminus, the 118-residue chain is Small ribosomal subunit protein uS13 (118 aa).

Residues 94–118 (GLPLRGQRTKTNARTRKGPRKPIRK) form a disordered region.

The protein belongs to the universal ribosomal protein uS13 family. In terms of assembly, part of the 30S ribosomal subunit. Forms a loose heterodimer with protein S19. Forms two bridges to the 50S subunit in the 70S ribosome.

Functionally, located at the top of the head of the 30S subunit, it contacts several helices of the 16S rRNA. In the 70S ribosome it contacts the 23S rRNA (bridge B1a) and protein L5 of the 50S subunit (bridge B1b), connecting the 2 subunits; these bridges are implicated in subunit movement. Contacts the tRNAs in the A and P-sites. The sequence is that of Small ribosomal subunit protein uS13 from Alcanivorax borkumensis (strain ATCC 700651 / DSM 11573 / NCIMB 13689 / SK2).